The chain runs to 273 residues: R-spondin-3 (273 aa).

An N-terminal signal peptide occupies residues 1–21 (MHLRLISWFFIILNFMEYIGS). 2 FU repeats span residues 35-86 (PNVS…GYYG) and 92-135 (INKC…GLEA). N-linked (GlcNAc...) asparagine glycosylation is present at Asn36. Cystine bridges form between Cys41–Cys48, Cys45–Cys54, Cys57–Cys76, Cys80–Cys95, Cys98–Cys105, Cys102–Cys111, Cys114–Cys125, Cys129–Cys142, Cys148–Cys190, Cys159–Cys166, and Cys199–Cys206. Positions 147-207 (HCEASEWSPW…KCTVQRKKCP (61 aa)) constitute a TSP type-1 domain. Residues 201–273 (VQRKKCPKGE…QKSVSVSTVH (73 aa)) are disordered. Positions 213 to 223 (RKGRERKRKKP) are enriched in basic residues. A compositionally biased stretch (basic and acidic residues) spans 224–252 (NKEESKDAIPDNKGLEPSRETPEQRENKQ).

It belongs to the R-spondin family. Interacts with the extracellular domain of FZD8 and LRP6. It however does not form a ternary complex with FZD8 and LRP6. Interacts with WNT1. Binds heparin. Interacts with LGR4, LGR5 and LGR6.

Its subcellular location is the secreted. Functionally, activator of the canonical Wnt signaling pathway by acting as a ligand for LGR4-6 receptors, which acts as a key regulator of angiogenesis. Upon binding to LGR4-6 (LGR4, LGR5 or LGR6), LGR4-6 associate with phosphorylated LRP6 and frizzled receptors that are activated by extracellular Wnt receptors, triggering the canonical Wnt signaling pathway to increase expression of target genes. Also regulates the canonical Wnt/beta-catenin-dependent pathway and non-canonical Wnt signaling by acting as an inhibitor of ZNRF3, an important regulator of the Wnt signaling pathway. Acts as a ligand for frizzled FZD8 and LRP6. May negatively regulate the TGF-beta pathway. Acts as a key regulator of angiogenesis by controlling vascular stability and pruning: acts by activating the non-canonical Wnt signaling pathway in endothelial cells. Can also amplify Wnt signaling pathway independently of LGR4-6 receptors, possibly by acting as a direct antagonistic ligand to RNF43 and ZNRF3. In Bos taurus (Bovine), this protein is R-spondin-3 (RSPO3).